Reading from the N-terminus, the 154-residue chain is dCTP deaminase (154 aa).

Residues 79 to 84 (RSSLAR), Asp95, Gln124, and Tyr138 contribute to the dCTP site.

It belongs to the dCTP deaminase family. In terms of assembly, homotrimer.

The enzyme catalyses dCTP + H2O + H(+) = dUTP + NH4(+). It functions in the pathway pyrimidine metabolism; dUMP biosynthesis; dUMP from dCTP (dUTP route): step 1/2. In terms of biological role, catalyzes the deamination of dCTP to dUTP. The chain is dCTP deaminase from Pyrococcus abyssi (strain GE5 / Orsay).